The chain runs to 201 residues: Increased recombination centers protein 21 (201 aa).

The Cytochrome b5 heme-binding domain occupies 122-200 (PLRINRKIVK…LQVCFIGVVC (79 aa)). Residues H158 and H182 each coordinate heme.

This sequence belongs to the cytochrome b5 family.

Functionally, involved in resistance to carboplatin and cisplatin. Is probably involved in a pathway contributing to genomic integrity. This chain is Increased recombination centers protein 21 (IRC21), found in Saccharomyces cerevisiae (strain ATCC 204508 / S288c) (Baker's yeast).